The primary structure comprises 285 residues: Diphthine methyl ester synthase (285 aa).

Residues L9, D84, G87, 112 to 113, and L163 contribute to the S-adenosyl-L-methionine site; that span reads SI. The residue at position 171 (S171) is a Phosphoserine. S-adenosyl-L-methionine-binding residues include V225 and H250.

The protein belongs to the diphthine synthase family.

It catalyses the reaction 2-[(3S)-amino-3-carboxypropyl]-L-histidyl-[translation elongation factor 2] + 4 S-adenosyl-L-methionine = diphthine methyl ester-[translation elongation factor 2] + 4 S-adenosyl-L-homocysteine + 3 H(+). It functions in the pathway protein modification; peptidyl-diphthamide biosynthesis. S-adenosyl-L-methionine-dependent methyltransferase that catalyzes four methylations of the modified target histidine residue in translation elongation factor 2 (EF-2), to form an intermediate called diphthine methyl ester. The four successive methylation reactions represent the second step of diphthamide biosynthesis. This Homo sapiens (Human) protein is Diphthine methyl ester synthase (DPH5).